We begin with the raw amino-acid sequence, 656 residues long: UvrABC system protein B (656 aa).

The Helicase ATP-binding domain maps to Lys29–Gln414. An ATP-binding site is contributed by Gly42–Thr49. The Beta-hairpin signature appears at Tyr95–Val118. A Helicase C-terminal domain is found at Gln434 to Leu596. The UVR domain maps to Ala614–Glu649.

It belongs to the UvrB family. As to quaternary structure, forms a heterotetramer with UvrA during the search for lesions. Interacts with UvrC in an incision complex.

The protein resides in the cytoplasm. The UvrABC repair system catalyzes the recognition and processing of DNA lesions. A damage recognition complex composed of 2 UvrA and 2 UvrB subunits scans DNA for abnormalities. Upon binding of the UvrA(2)B(2) complex to a putative damaged site, the DNA wraps around one UvrB monomer. DNA wrap is dependent on ATP binding by UvrB and probably causes local melting of the DNA helix, facilitating insertion of UvrB beta-hairpin between the DNA strands. Then UvrB probes one DNA strand for the presence of a lesion. If a lesion is found the UvrA subunits dissociate and the UvrB-DNA preincision complex is formed. This complex is subsequently bound by UvrC and the second UvrB is released. If no lesion is found, the DNA wraps around the other UvrB subunit that will check the other stand for damage. This chain is UvrABC system protein B, found in Mycoplasma genitalium (strain ATCC 33530 / DSM 19775 / NCTC 10195 / G37) (Mycoplasmoides genitalium).